Consider the following 209-residue polypeptide: MKKQKVTSQKQKITYRVNEQIRVPEVRIIFQDGTQKVMQTAEARRMAEERNTDLIEVQPNAEPPVCKFDNLGKLLFKMAQRDKDLKKKQKTTTLKELRFHPNTDKHDFDFKTAHLEEFLRKGNRVRATIVFLGRSIIYKDKGLELAERLTERLSVVGNRDGDPKFEGKKLFVYFEPDKKKIDAYDRIRTKTGKLAPLPDEPEEDGENND.

Belongs to the IF-3 family. In terms of assembly, monomer.

The protein resides in the cytoplasm. Functionally, IF-3 binds to the 30S ribosomal subunit and shifts the equilibrium between 70S ribosomes and their 50S and 30S subunits in favor of the free subunits, thus enhancing the availability of 30S subunits on which protein synthesis initiation begins. In Chlorobium phaeovibrioides (strain DSM 265 / 1930) (Prosthecochloris vibrioformis (strain DSM 265)), this protein is Translation initiation factor IF-3.